The following is a 502-amino-acid chain: ATP synthase subunit alpha (502 aa).

The tract at residues 115–135 is disordered; the sequence is VDGLGPINTTNTRPIESPAPG. 169-176 lines the ATP pocket; the sequence is GDRQTGKT.

The protein belongs to the ATPase alpha/beta chains family. As to quaternary structure, F-type ATPases have 2 components, CF(1) - the catalytic core - and CF(0) - the membrane proton channel. CF(1) has five subunits: alpha(3), beta(3), gamma(1), delta(1), epsilon(1). CF(0) has three main subunits: a(1), b(2) and c(9-12). The alpha and beta chains form an alternating ring which encloses part of the gamma chain. CF(1) is attached to CF(0) by a central stalk formed by the gamma and epsilon chains, while a peripheral stalk is formed by the delta and b chains.

Its subcellular location is the cell membrane. The catalysed reaction is ATP + H2O + 4 H(+)(in) = ADP + phosphate + 5 H(+)(out). Its function is as follows. Produces ATP from ADP in the presence of a proton gradient across the membrane. The alpha chain is a regulatory subunit. The chain is ATP synthase subunit alpha from Bacillus anthracis (strain A0248).